A 143-amino-acid chain; its full sequence is Transcriptional regulatory protein RosR (143 aa).

The C2H3-type zinc-finger motif lies at 79–97 (CLECGGNFKSLKRHLMTHH).

The protein belongs to the ros/MucR family.

The protein is Transcriptional regulatory protein RosR (rosR) of Rhizobium etli (strain ATCC 51251 / DSM 11541 / JCM 21823 / NBRC 15573 / CFN 42).